Here is a 430-residue protein sequence, read N- to C-terminus: Adenylosuccinate synthetase (430 aa).

Residues 13–19 (GDEGKGK) and 41–43 (GHT) contribute to the GTP site. Aspartate 14 acts as the Proton acceptor in catalysis. 2 residues coordinate Mg(2+): aspartate 14 and glycine 41. Residues 14 to 17 (DEGK), 39 to 42 (NAGH), threonine 130, arginine 144, glutamine 225, threonine 240, and arginine 304 each bind IMP. Histidine 42 (proton donor) is an active-site residue. 300–306 (ASTGRPR) is a substrate binding site. GTP-binding positions include arginine 306, 332 to 334 (KLD), and 414 to 416 (STG).

Belongs to the adenylosuccinate synthetase family. In terms of assembly, homodimer. The cofactor is Mg(2+).

The protein localises to the cytoplasm. It carries out the reaction IMP + L-aspartate + GTP = N(6)-(1,2-dicarboxyethyl)-AMP + GDP + phosphate + 2 H(+). Its pathway is purine metabolism; AMP biosynthesis via de novo pathway; AMP from IMP: step 1/2. Plays an important role in the de novo pathway of purine nucleotide biosynthesis. Catalyzes the first committed step in the biosynthesis of AMP from IMP. In Stenotrophomonas maltophilia (strain R551-3), this protein is Adenylosuccinate synthetase.